A 381-amino-acid chain; its full sequence is Alcohol dehydrogenase class-3 (381 aa).

Residue C49 participates in Zn(2+) binding. H50 is an NAD(+) binding site. T51 and H71 together coordinate an alcohol. Residues H71, E72, C101, C104, C107, C115, and C179 each contribute to the Zn(2+) site. NAD(+) contacts are provided by residues 204-209 (GLGTVG), D228, K233, I274, 297-299 (VGV), 322-324 (TAF), and R374.

The protein belongs to the zinc-containing alcohol dehydrogenase family. Class-III subfamily. As to quaternary structure, homodimer. Zn(2+) is required as a cofactor.

The protein localises to the cytoplasm. The catalysed reaction is a primary alcohol + NAD(+) = an aldehyde + NADH + H(+). It catalyses the reaction a secondary alcohol + NAD(+) = a ketone + NADH + H(+). The enzyme catalyses S-(hydroxymethyl)glutathione + NADP(+) = S-formylglutathione + NADPH + H(+). It carries out the reaction S-(hydroxymethyl)glutathione + NAD(+) = S-formylglutathione + NADH + H(+). This chain is Alcohol dehydrogenase class-3, found in Oryza sativa subsp. japonica (Rice).